The sequence spans 414 residues: EARP and GARP complex-interacting protein 1 (414 aa).

Met1 carries the N-acetylmethionine modification. WD repeat units follow at residues 159 to 199, 209 to 249, 253 to 293, and 297 to 337; these read TAHG…SQAV, KGQL…QIYC, AHGQ…EPVK, and EHSH…SEPF. The interval 337 to 362 is disordered; sequence FGHLVDDDDISDQEDHRSEEKSKEPL. Phosphoserine is present on Ser347. Over residues 349-362 the composition is skewed to basic and acidic residues; sequence QEDHRSEEKSKEPL. Residues 372-412 form a WD 5 repeat; the sequence is EHEDSVYAVDWSSADPWLFASLSYDGRLVINRVPRALKYHI.

Belongs to the WD repeat EIPR1 family. Interacts with two multisubunit tethering complexes: EARP composed of VPS50, VPS51, VPS52 and VPS53 subunits and GARP complex composed of VPS51, VPS52, VPS53 and VPS54 subunits. Interacts with SNAP29.

Its subcellular location is the golgi apparatus. It localises to the trans-Golgi network. Its function is as follows. Acts as a component of endosomal retrieval machinery that is involved in protein transport from early endosomes to either recycling endosomes or the trans-Golgi network. Mediates the recruitment of Golgi-associated retrograde protein (GARP) complex to the trans-Golgi network and controls early endosome-to-Golgi transport of internalized protein. Promotes the recycling of internalized transferrin receptor (TFRC) to the plasma membrane through interaction with endosome-associated recycling protein (EARP) complex. Controls proper insulin distribution and secretion, and retention of cargo in mature dense core vesicles. Required for the stability of the endosome-associated retrograde protein (EARP) complex subunits and for proper localization and association of EARP with membranes. In Pongo abelii (Sumatran orangutan), this protein is EARP and GARP complex-interacting protein 1.